A 305-amino-acid polypeptide reads, in one-letter code: Flavin-dependent thymidylate synthase (305 aa).

The ThyX domain maps to 50–261; it reads GFVRLIDYLG…PCATASFENH (212 aa). Residues serine 96, 119 to 121, and glutamate 127 each bind FAD; that span reads RHR. DUMP contacts are provided by residues 116 to 119, 127 to 131, and arginine 200; these read QWMR and EVSSR. Residues 119 to 129 carry the ThyX motif motif; the sequence is RHRTARISEVS. FAD is bound by residues 216 to 218 and histidine 222; that span reads DLH. DUMP is bound at residue arginine 227. The active-site Involved in ionization of N3 of dUMP, leading to its activation is the arginine 227.

This sequence belongs to the thymidylate synthase ThyX family. In terms of assembly, homotetramer. It depends on FAD as a cofactor.

It carries out the reaction dUMP + (6R)-5,10-methylene-5,6,7,8-tetrahydrofolate + NADPH + H(+) = dTMP + (6S)-5,6,7,8-tetrahydrofolate + NADP(+). It functions in the pathway pyrimidine metabolism; dTTP biosynthesis. Catalyzes the reductive methylation of 2'-deoxyuridine-5'-monophosphate (dUMP) to 2'-deoxythymidine-5'-monophosphate (dTMP) while utilizing 5,10-methylenetetrahydrofolate (mTHF) as the methyl donor, and NADPH and FADH(2) as the reductant. The chain is Flavin-dependent thymidylate synthase from Treponema pallidum (strain Nichols).